Reading from the N-terminus, the 378-residue chain is Phospho-N-acetylmuramoyl-pentapeptide-transferase (378 aa).

Helical transmembrane passes span 27-47, 74-94, 96-116, 135-155, 184-204, 216-236, 256-276, 280-300, 305-325, and 355-375; these read TAFA…WLIN, TMGG…WADL, YPYV…GFLD, LVYQ…MRAY, WTYV…VVFY, GLAI…AYAG, LTIF…YNAH, IFMG…VAVL, ILLL…ILQV, and KIIA…LTTL.

Belongs to the glycosyltransferase 4 family. MraY subfamily. Mg(2+) serves as cofactor.

It localises to the cell inner membrane. It catalyses the reaction UDP-N-acetyl-alpha-D-muramoyl-L-alanyl-gamma-D-glutamyl-meso-2,6-diaminopimeloyl-D-alanyl-D-alanine + di-trans,octa-cis-undecaprenyl phosphate = di-trans,octa-cis-undecaprenyl diphospho-N-acetyl-alpha-D-muramoyl-L-alanyl-D-glutamyl-meso-2,6-diaminopimeloyl-D-alanyl-D-alanine + UMP. It functions in the pathway cell wall biogenesis; peptidoglycan biosynthesis. In terms of biological role, catalyzes the initial step of the lipid cycle reactions in the biosynthesis of the cell wall peptidoglycan: transfers peptidoglycan precursor phospho-MurNAc-pentapeptide from UDP-MurNAc-pentapeptide onto the lipid carrier undecaprenyl phosphate, yielding undecaprenyl-pyrophosphoryl-MurNAc-pentapeptide, known as lipid I. The sequence is that of Phospho-N-acetylmuramoyl-pentapeptide-transferase from Solibacter usitatus (strain Ellin6076).